The following is a 227-amino-acid chain: Ribosomal RNA large subunit methyltransferase E (227 aa).

S-adenosyl-L-methionine is bound by residues Gly-78, Trp-80, Asp-103, Asp-119, and Asp-143. Lys-183 functions as the Proton acceptor in the catalytic mechanism.

This sequence belongs to the class I-like SAM-binding methyltransferase superfamily. RNA methyltransferase RlmE family.

Its subcellular location is the cytoplasm. The enzyme catalyses uridine(2552) in 23S rRNA + S-adenosyl-L-methionine = 2'-O-methyluridine(2552) in 23S rRNA + S-adenosyl-L-homocysteine + H(+). Specifically methylates the uridine in position 2552 of 23S rRNA at the 2'-O position of the ribose in the fully assembled 50S ribosomal subunit. The polypeptide is Ribosomal RNA large subunit methyltransferase E (Rickettsia typhi (strain ATCC VR-144 / Wilmington)).